A 283-amino-acid chain; its full sequence is Protein/nucleic acid deglycase HchA (283 aa).

Zn(2+) is bound by residues histidine 86, glutamate 91, and histidine 123. Cysteine 185 acts as the Nucleophile in catalysis.

The protein belongs to the peptidase C56 family. HchA subfamily. As to quaternary structure, homodimer.

It is found in the cytoplasm. It catalyses the reaction N(omega)-(1-hydroxy-2-oxopropyl)-L-arginyl-[protein] + H2O = lactate + L-arginyl-[protein] + H(+). The enzyme catalyses N(6)-(1-hydroxy-2-oxopropyl)-L-lysyl-[protein] + H2O = lactate + L-lysyl-[protein] + H(+). It carries out the reaction S-(1-hydroxy-2-oxopropyl)-L-cysteinyl-[protein] + H2O = lactate + L-cysteinyl-[protein] + H(+). The catalysed reaction is N(omega)-(1-hydroxy-2-oxoethyl)-L-arginyl-[protein] + H2O = L-arginyl-[protein] + glycolate + H(+). It catalyses the reaction N(6)-(1-hydroxy-2-oxoethyl)-L-lysyl-[protein] + H2O = glycolate + L-lysyl-[protein] + H(+). The enzyme catalyses S-(1-hydroxy-2-oxoethyl)-L-cysteinyl-[protein] + H2O = glycolate + L-cysteinyl-[protein] + H(+). It carries out the reaction N(2)-(1-hydroxy-2-oxopropyl)-dGTP + H2O = lactate + dGTP + H(+). The catalysed reaction is N(2)-(1-hydroxy-2-oxopropyl)-GTP + H2O = lactate + GTP + H(+). It catalyses the reaction N(2)-(1-hydroxy-2-oxopropyl)-GDP + H2O = lactate + GDP + H(+). The enzyme catalyses N(2)-(1-hydroxy-2-oxopropyl)-GMP + H2O = lactate + GMP + H(+). It carries out the reaction N(2)-(1-hydroxy-2-oxoethyl)-dGTP + H2O = dGTP + glycolate + H(+). The catalysed reaction is N(2)-(1-hydroxy-2-oxoethyl)-GTP + H2O = glycolate + GTP + H(+). It catalyses the reaction N(2)-(1-hydroxy-2-oxoethyl)-GDP + H2O = glycolate + GDP + H(+). The enzyme catalyses N(2)-(1-hydroxy-2-oxoethyl)-GMP + H2O = glycolate + GMP + H(+). It carries out the reaction an N(2)-(1-hydroxy-2-oxopropyl)-guanosine in RNA + H2O = a guanosine in RNA + lactate + H(+). The catalysed reaction is an N(2)-(1-hydroxy-2-oxopropyl)-2'-deoxyguanosine in DNA + H2O = a 2'-deoxyguanosine in DNA + lactate + H(+). It catalyses the reaction an N(2)-(1-hydroxy-2-oxoethyl)-guanosine in RNA + H2O = a guanosine in RNA + glycolate + H(+). The enzyme catalyses an N(2)-(1-hydroxy-2-oxoethyl)-2'-deoxyguanosine in DNA + H2O = a 2'-deoxyguanosine in DNA + glycolate + H(+). Protein and nucleotide deglycase that catalyzes the deglycation of the Maillard adducts formed between amino groups of proteins or nucleotides and reactive carbonyl groups of glyoxals. Thus, functions as a protein deglycase that repairs methylglyoxal- and glyoxal-glycated proteins, and releases repaired proteins and lactate or glycolate, respectively. Deglycates cysteine, arginine and lysine residues in proteins, and thus reactivates these proteins by reversing glycation by glyoxals. Acts on early glycation intermediates (hemithioacetals and aminocarbinols), preventing the formation of Schiff bases and advanced glycation endproducts (AGE). Also functions as a nucleotide deglycase able to repair glycated guanine in the free nucleotide pool (GTP, GDP, GMP, dGTP) and in DNA and RNA. Is thus involved in a major nucleotide repair system named guanine glycation repair (GG repair), dedicated to reversing methylglyoxal and glyoxal damage via nucleotide sanitization and direct nucleic acid repair. Plays an important role in protecting cells from carbonyl stress. In Escherichia coli (strain 55989 / EAEC), this protein is Protein/nucleic acid deglycase HchA.